We begin with the raw amino-acid sequence, 95 residues long: Alpha-conotoxin GeXXA (95 aa).

The signal sequence occupies residues 1–21; sequence MPKQEKMMLVLLILPLPYCNA. The propeptide occupies 22–45; it reads AGVTTVQWGGHGDGLDRYLQRGVR. 4 disulfide bridges follow: cysteine 64-cysteine 73, cysteine 69-cysteine 81, cysteine 74-cysteine 91, and cysteine 79-cysteine 93.

The protein belongs to the conotoxin D superfamily. Homodimer. Pseudo-homodimer (identical sequence, different post-translational modifications). In terms of tissue distribution, expressed by the venom duct.

Its subcellular location is the secreted. Its function is as follows. Alpha-D-conopeptides act as non-competitive inhibitors of nicotinic acetylcholine receptors (nAChR). Through its two C-terminal domains, this homodimeric protein would bind to two nAChR allosteric sites, located outside the nAChR C-loop of the principal binding face and at the adjacent binding interface in a clockwise direction. This toxin has strong inhibitory activity on rat alpha-9-alpha-10 (CHRNA9-CHRNA10) (IC(50)=1.2 nM) and a moderate inhibitory activity on human alpha-7 (CHRNA7) (IC(50)=210 nM), rat alpha-3-beta-2 (CHRNA3-CHRNB2) (IC(50)=498 nM), rat alpha-3-beta-4 (CHRNA3-CHRNB4) (IC(50)=614 nM) and rat alpha-1-beta-1-delta-epsilon (CHRNA1-CHRNB1-CHRNE-CHRND) (IC(50)=743 nM) subtypes. Shows a weaker inhibitory activity on human alpha-9-alpha-10 (IC(50)=28 nM) than on the rat channel. This is explained by a different residue in the probable binding site (His-31 in rat alpha-10 and Leu-31 in human). The polypeptide is Alpha-conotoxin GeXXA (Conus generalis (General cone)).